Consider the following 148-residue polypeptide: Putative nickel-responsive regulator (148 aa).

Ni(2+) contacts are provided by H88, H99, H101, and C107.

The protein belongs to the transcriptional regulatory CopG/NikR family. Homotetramer. Ni(2+) serves as cofactor.

In terms of biological role, transcriptional regulator. This is Putative nickel-responsive regulator from Helicobacter pylori (strain J99 / ATCC 700824) (Campylobacter pylori J99).